The following is a 634-amino-acid chain: 1-deoxy-D-xylulose-5-phosphate synthase (634 aa).

Thiamine diphosphate contacts are provided by residues histidine 79 and 120 to 122 (GHA). A Mg(2+)-binding site is contributed by aspartate 151. Thiamine diphosphate contacts are provided by residues 152–153 (GS), asparagine 180, tyrosine 292, and glutamate 376. Asparagine 180 provides a ligand contact to Mg(2+).

The protein belongs to the transketolase family. DXPS subfamily. Homodimer. It depends on Mg(2+) as a cofactor. The cofactor is thiamine diphosphate.

The enzyme catalyses D-glyceraldehyde 3-phosphate + pyruvate + H(+) = 1-deoxy-D-xylulose 5-phosphate + CO2. Its pathway is metabolic intermediate biosynthesis; 1-deoxy-D-xylulose 5-phosphate biosynthesis; 1-deoxy-D-xylulose 5-phosphate from D-glyceraldehyde 3-phosphate and pyruvate: step 1/1. Functionally, catalyzes the acyloin condensation reaction between C atoms 2 and 3 of pyruvate and glyceraldehyde 3-phosphate to yield 1-deoxy-D-xylulose-5-phosphate (DXP). This Porphyromonas gingivalis (strain ATCC BAA-308 / W83) protein is 1-deoxy-D-xylulose-5-phosphate synthase.